Consider the following 516-residue polypeptide: UvrABC system protein C (516 aa).

In terms of domain architecture, GIY-YIG spans histidine 9–isoleucine 87. The UVR domain maps to glycine 191–leucine 226.

It belongs to the UvrC family. Interacts with UvrB in an incision complex.

The protein localises to the cytoplasm. In terms of biological role, the UvrABC repair system catalyzes the recognition and processing of DNA lesions. UvrC both incises the 5' and 3' sides of the lesion. The N-terminal half is responsible for the 3' incision and the C-terminal half is responsible for the 5' incision. This chain is UvrABC system protein C, found in Methanosarcina acetivorans (strain ATCC 35395 / DSM 2834 / JCM 12185 / C2A).